The chain runs to 334 residues: G2/mitotic-specific cyclin-1 (334 aa).

It belongs to the cyclin family. Cyclin AB subfamily.

In terms of biological role, essential for the control of the cell cycle at the G2/M (mitosis) transition. The chain is G2/mitotic-specific cyclin-1 (CYC1) from Trypanosoma brucei brucei.